The following is a 206-amino-acid chain: Large ribosomal subunit protein uL4 (206 aa).

The segment at 44–87 (NRQGTQSAKTRSEVSGGGRKPWRQKGTGHARQGSTRSPQWTGGG) is disordered.

The protein belongs to the universal ribosomal protein uL4 family. Part of the 50S ribosomal subunit.

In terms of biological role, one of the primary rRNA binding proteins, this protein initially binds near the 5'-end of the 23S rRNA. It is important during the early stages of 50S assembly. It makes multiple contacts with different domains of the 23S rRNA in the assembled 50S subunit and ribosome. Forms part of the polypeptide exit tunnel. This is Large ribosomal subunit protein uL4 from Lachnospira eligens (strain ATCC 27750 / DSM 3376 / VPI C15-48 / C15-B4) (Eubacterium eligens).